The sequence spans 663 residues: Epithelial sodium channel subunit gamma-2 (663 aa).

At 1–55 (MSNSGKKLTQKLKKNLPVTGPQAPTLYELMQWYCLNTNTHGCRRIVVSKGRLRRW) the chain is on the cytoplasmic side. The helical transmembrane segment at 56–76 (IWIVLTLIAVALIFWQCALLL) threads the bilayer. The Extracellular portion of the chain corresponds to 77-544 (MTYYSVSASI…GGQLGLWMSC (468 aa)). 8 disulfides stabilise this stretch: C101/C286, C209/C217, C263/C270, C375/C460, C397/C456, C401/C452, C410/C437, and C412/C426. The chain crosses the membrane as a helical span at residues 545 to 565 (SMVCGLEIVEVFFIDSFWVIL). The Cytoplasmic segment spans residues 566–663 (RQKWHKLCNW…IDSDEDVERF (98 aa)).

Belongs to the amiloride-sensitive sodium channel (TC 1.A.6) family. SCNN1G subfamily. Component of the heterotrimeric epithelial sodium channel (ENaC) composed of an alpha/SCNN1A, a beta/SCNN1B and a gamma/SCNN1G subunit.

It is found in the apical cell membrane. It catalyses the reaction Na(+)(in) = Na(+)(out). Its activity is regulated as follows. Originally identified and characterized by its inhibition by the diuretic drug amiloride. Functionally, this is one of the three pore-forming subunits of the heterotrimeric epithelial sodium channel (ENaC), a critical regulator of sodium balance and fluid homeostasis. ENaC operates in epithelial tissues, where it mediates the electrodiffusion of sodium ions from extracellular fluid through the apical membrane of cells, with water following osmotically. This is Epithelial sodium channel subunit gamma-2 (scnn1g-b) from Xenopus laevis (African clawed frog).